The primary structure comprises 179 residues: Large ribosomal subunit protein uL5 (179 aa).

The protein belongs to the universal ribosomal protein uL5 family. As to quaternary structure, part of the 50S ribosomal subunit; part of the 5S rRNA/L5/L18/L25 subcomplex. Contacts the 5S rRNA and the P site tRNA. Forms a bridge to the 30S subunit in the 70S ribosome.

Functionally, this is one of the proteins that bind and probably mediate the attachment of the 5S RNA into the large ribosomal subunit, where it forms part of the central protuberance. In the 70S ribosome it contacts protein S13 of the 30S subunit (bridge B1b), connecting the 2 subunits; this bridge is implicated in subunit movement. Contacts the P site tRNA; the 5S rRNA and some of its associated proteins might help stabilize positioning of ribosome-bound tRNAs. This Stutzerimonas stutzeri (strain A1501) (Pseudomonas stutzeri) protein is Large ribosomal subunit protein uL5.